The sequence spans 154 residues: Transcriptional repressor NrdR (154 aa).

Residues 3-34 (CPFCGNENTRVIDTRAAEDGFAIKRRRECENC) fold into a zinc finger. The ATP-cone domain occupies 49–139 (LIVVKKDGSK…VYRQFKDVNS (91 aa)).

This sequence belongs to the NrdR family. Requires Zn(2+) as cofactor.

Negatively regulates transcription of bacterial ribonucleotide reductase nrd genes and operons by binding to NrdR-boxes. This chain is Transcriptional repressor NrdR, found in Carboxydothermus hydrogenoformans (strain ATCC BAA-161 / DSM 6008 / Z-2901).